Consider the following 284-residue polypeptide: Protein phosphatase 1 regulatory subunit 3B (284 aa).

Residues 61 to 64 carry the PP1-binding motif motif; the sequence is RVSF. The CBM21 domain occupies 124–232; that stretch reads RNRLQTNHVC…SNKGKNYRIT (109 aa). Phosphoserine is present on S260.

As to quaternary structure, interacts with glycogen, PPP1CC catalytic subunit of PP1 and PYGL. Associates with glycogen particles. Forms complexes with debranching enzyme, glycogen phosphorylase, glycogen synthase and phosphorylase kinase which is necessary for its regulation of PP1 activity. In terms of tissue distribution, highly expressed in liver (at protein level). Expressed predominantly in liver. Expressed moderately in heart. Expressed weakly in prostate, stomach, thyroid, lung, kidney, spleen and skeletal muscle.

Its function is as follows. Acts as a glycogen-targeting subunit for phosphatase PP1. Facilitates interaction of the PP1 with enzymes of the glycogen metabolism and regulates its activity. Suppresses the rate at which PP1 dephosphorylates (inactivates) glycogen phosphorylase and enhances the rate at which it activates glycogen synthase and therefore limits glycogen breakdown. Its activity is inhibited by PYGL, resulting in inhibition of the glycogen synthase and glycogen phosphorylase phosphatase activities of PP1. Dramatically increases basal and insulin-stimulated glycogen synthesis upon overexpression in hepatocytes. The sequence is that of Protein phosphatase 1 regulatory subunit 3B (Ppp1r3b) from Mus musculus (Mouse).